The primary structure comprises 544 residues: Membrane protein insertase YidC (544 aa).

6 helical membrane-spanning segments follow: residues 13 to 33 (LSLF…SWML), 321 to 341 (LWYL…DVIP), 343 to 363 (WGLS…PLTF), 409 to 429 (LGGC…YSLV), 461 to 481 (LYFV…FTQL), and 506 to 526 (MPIM…IYWI).

The protein belongs to the OXA1/ALB3/YidC family. Type 1 subfamily. In terms of assembly, interacts with the Sec translocase complex via SecD. Specifically interacts with transmembrane segments of nascent integral membrane proteins during membrane integration.

The protein resides in the cell inner membrane. Functionally, required for the insertion and/or proper folding and/or complex formation of integral membrane proteins into the membrane. Involved in integration of membrane proteins that insert both dependently and independently of the Sec translocase complex, as well as at least some lipoproteins. Aids folding of multispanning membrane proteins. In Borreliella afzelii (strain PKo) (Borrelia afzelii), this protein is Membrane protein insertase YidC.